An 842-amino-acid polypeptide reads, in one-letter code: MDIRKAYLDFFASKGHEITPSSPLVPDDATLLFTNAGMVPFKSIFTGEIPRPNPPRKTSCQTCIRAGGKHNDLDNVGYTARHHTFFEMLGNFSFGDYFKEQAIAYAWEFVTEVLKLPKDRLYVTVHENDDEAFNLWQKHIQKERIYKFGDKDNFWQMGDTGPCGPCSEIFYDQGQEHFNSSEDYMGGDGDRFLEIWNLVFMQYERSADGVLSPLPKPSIDTGMGLERVTAIKEGKFSNFDSSLFMPIINEISKLCNKTYVYESGASFRVIADHIRSSVFLLAQGVSFDKEGRGYVLRRILRRALRHGYLLGFKQAFMYKLVDVVCDLMGGHYTYLNEKKDFIKEQIRLEEERFLSTIENGIEIFNEELKNTKEIFSGEVAFKLYDTYGFPLDLTADMLREKNLKVDEEKFELFMNEQKARAKASWKGSGDKTASGDFKNLLEKFGENHFVGYEKAECESKILALLDEDFKEVSTLKDAGWVMLENTPFYATSGGQSADSGFIAKREVLDTQKFFNLNLSFIKAGEELKVNDIVHARIDTEKREQIARHHSATHLLHHALREILGSHVSQAGSLVESNKLRFDFTHHKALNKEELESIEKRVNKMIINSSEAILENMPLEEAKKSGAIALFNEKYQGNVRVLTLGESKELCGGTHVKNTAQIGSFYIVKESGVSAGVRRIEAVVSKAALEFVKNQLEELSKVKDELKNNDILSGIKKLKNEILSLKNELKNSSKTELDSKNIQGVEICVKRIDNGDIKAMIDDFKNKFAKAVILLIQVKDEKITLAAGVKDVPLKAGALVKEAAQILGGNGGGRDDFATAGGKDLSKINEALKQSLETIEKAL.

Residues histidine 549, histidine 553, cysteine 650, and histidine 654 each coordinate Zn(2+).

The protein belongs to the class-II aminoacyl-tRNA synthetase family. Zn(2+) is required as a cofactor.

It localises to the cytoplasm. The catalysed reaction is tRNA(Ala) + L-alanine + ATP = L-alanyl-tRNA(Ala) + AMP + diphosphate. Its function is as follows. Catalyzes the attachment of alanine to tRNA(Ala) in a two-step reaction: alanine is first activated by ATP to form Ala-AMP and then transferred to the acceptor end of tRNA(Ala). Also edits incorrectly charged Ser-tRNA(Ala) and Gly-tRNA(Ala) via its editing domain. In Campylobacter jejuni subsp. jejuni serotype O:2 (strain ATCC 700819 / NCTC 11168), this protein is Alanine--tRNA ligase.